Consider the following 390-residue polypeptide: Transforming growth factor beta-1 proprotein (390 aa).

An N-terminal signal peptide occupies residues 1 to 29 (MPPSGLRLLPLLLPLLWLLMLTPGRPVAG). Residues 30–74 (LSTCKTIDMELVKRKRIEAIRGQILSKLRLASPPSQGDVPPGPLP) form a straightjacket domain region. Residues 75–271 (EAILALYNST…ATPLERAQHL (197 aa)) are arm domain. Asn-82, Asn-136, and Asn-176 each carry an N-linked (GlcNAc...) asparagine glycan. Residues 226-252 (DSKDNTLQVDINGFSSGRRGDLATIHG) are bowtie tail. The Cell attachment site signature appears at 244–246 (RGD). Intrachain disulfides connect Cys-285-Cys-294, Cys-293-Cys-356, Cys-322-Cys-387, and Cys-326-Cys-389.

This sequence belongs to the TGF-beta family. In terms of assembly, homodimer; disulfide-linked. Interacts with the serine proteases, HTRA1 and HTRA3: the interaction with either inhibits TGFB1-mediated signaling and the HTRA protease activity is required for this inhibition. May interact with THSD4; this interaction may lead to sequestration by FBN1 microfibril assembly and attenuation of TGFB signaling. Interacts with CD109, DPT and ASPN. Interacts with EFEMP2. Interacts with TSKU; the interaction contributes to regulation of the hair cycle. Interacts with TGFBR3. Homodimer; disulfide-linked. Interacts with transforming growth factor beta-1 (TGF-beta-1) chain; interaction is non-covalent and maintains TGF-beta-1 in a latent state; each latency-associated peptide (LAP) monomer interacts with TGF-beta-1 in the other monomer. Interacts with LTBP1; leading to regulation of TGF-beta-1 activation. Interacts with LRRC32/GARP; leading to regulation of TGF-beta-1 activation on the surface of activated regulatory T-cells (Tregs). Interacts with LRRC33/NRROS; leading to regulation of TGF-beta-1 activation in macrophages and microglia. Interacts (via cell attachment site) with integrins ITGAV and ITGB6 (ITGAV:ITGB6), leading to release of the active TGF-beta-1. Interacts with NREP; the interaction results in a decrease in TGFB1 autoinduction. Interacts with HSP90AB1; inhibits latent TGFB1 activation. As to quaternary structure, homodimer; disulfide-linked. Interacts with TGF-beta receptors (TGFBR1 and TGFBR2), leading to signal transduction. Interacts with EFEMP2. Transforming growth factor beta-1 proprotein: The precursor proprotein is cleaved in the Golgi apparatus by FURIN to form Transforming growth factor beta-1 (TGF-beta-1) and Latency-associated peptide (LAP) chains, which remain non-covalently linked, rendering TGF-beta-1 inactive. In terms of processing, N-glycosylated. Deglycosylation leads to activation of Transforming growth factor beta-1 (TGF-beta-1); mechanisms triggering deglycosylation-driven activation of TGF-beta-1 are however unclear.

The protein resides in the secreted. It localises to the extracellular space. It is found in the extracellular matrix. Functionally, transforming growth factor beta-1 proprotein: Precursor of the Latency-associated peptide (LAP) and Transforming growth factor beta-1 (TGF-beta-1) chains, which constitute the regulatory and active subunit of TGF-beta-1, respectively. In terms of biological role, required to maintain the Transforming growth factor beta-1 (TGF-beta-1) chain in a latent state during storage in extracellular matrix. Associates non-covalently with TGF-beta-1 and regulates its activation via interaction with 'milieu molecules', such as LTBP1, LRRC32/GARP and LRRC33/NRROS, that control activation of TGF-beta-1. Interaction with LRRC33/NRROS regulates activation of TGF-beta-1 in macrophages and microglia. Interaction with LRRC32/GARP controls activation of TGF-beta-1 on the surface of activated regulatory T-cells (Tregs). Interaction with integrins (ITGAV:ITGB6 or ITGAV:ITGB8) results in distortion of the Latency-associated peptide chain and subsequent release of the active TGF-beta-1. Its function is as follows. Multifunctional protein that regulates the growth and differentiation of various cell types and is involved in various processes, such as normal development, immune function, microglia function and responses to neurodegeneration. Activation into mature form follows different steps: following cleavage of the proprotein in the Golgi apparatus, Latency-associated peptide (LAP) and Transforming growth factor beta-1 (TGF-beta-1) chains remain non-covalently linked rendering TGF-beta-1 inactive during storage in extracellular matrix. At the same time, LAP chain interacts with 'milieu molecules', such as LTBP1, LRRC32/GARP and LRRC33/NRROS that control activation of TGF-beta-1 and maintain it in a latent state during storage in extracellular milieus. TGF-beta-1 is released from LAP by integrins (ITGAV:ITGB6 or ITGAV:ITGB8): integrin-binding to LAP stabilizes an alternative conformation of the LAP bowtie tail and results in distortion of the LAP chain and subsequent release of the active TGF-beta-1. Once activated following release of LAP, TGF-beta-1 acts by binding to TGF-beta receptors (TGFBR1 and TGFBR2), which transduce signal. While expressed by many cells types, TGF-beta-1 only has a very localized range of action within cell environment thanks to fine regulation of its activation by Latency-associated peptide chain (LAP) and 'milieu molecules'. Plays an important role in bone remodeling: acts as a potent stimulator of osteoblastic bone formation, causing chemotaxis, proliferation and differentiation in committed osteoblasts. Can promote either T-helper 17 cells (Th17) or regulatory T-cells (Treg) lineage differentiation in a concentration-dependent manner. At high concentrations, leads to FOXP3-mediated suppression of RORC and down-regulation of IL-17 expression, favoring Treg cell development. At low concentrations in concert with IL-6 and IL-21, leads to expression of the IL-17 and IL-23 receptors, favoring differentiation to Th17 cells. Stimulates sustained production of collagen through the activation of CREB3L1 by regulated intramembrane proteolysis (RIP). Mediates SMAD2/3 activation by inducing its phosphorylation and subsequent translocation to the nucleus. Positively regulates odontoblastic differentiation in dental papilla cells, via promotion of IPO7-mediated translocation of phosphorylated SMAD2 to the nucleus and subsequent transcription of target genes. Can induce epithelial-to-mesenchymal transition (EMT) and cell migration in various cell types. The protein is Transforming growth factor beta-1 proprotein (TGFB1) of Bos taurus (Bovine).